The sequence spans 1333 residues: MVSCWDTAVLPYALLGCLLLTGYGSGSKLKVPELSLKGTQHVMQAGQTLFLKCRGEAAHSWSLPTTVSQEDKRLSITPPSACGRDNRQFCSTLTLDTAQANHTGLYTCRYLPTSTSKKKKAESSIYIFVSDAGSPFIEMHTDIPKLVHMTEGRQLIIPCRVTSPNVTVTLKKFPFDTLTPDGQRITWDSRRGFIIANATYKEIGLLNCEATVNGHLYQTNYLTHRQTNTILDVQIRPPSPVRLLHGQTLVLNCTATTELNTRVQMSWNYPGKATKRASIRQRIDRSHSHNNVFHSVLKINNVESRDKGLYTCRVKSGSSFQSFNTSVHVYEKGFISVKHRKQPVQETTAGRRSYRLSMKVKAFPSPEIVWLKDGSPATLKSARYLVHGYSLIIKDVTTEDAGDYTILLGIKQSRLFKNLTATLIVNVKPQIYEKSVSSLPSPPLYPLGSRQVLTCTVYGIPRPTITWLWHPCHHNHSKERYDFCTENEESFILDPSSNLGNRIESISQRMTVIEGTNKTVSTLVVADSQTPGIYSCRAFNKIGTVERNIKFYVTDVPNGFHVSLEKMPAEGEDLKLSCVVNKFLYRDITWILLRTVNNRTMHHSISKQKMATTQDYSITLNLVIKNVSLEDSGTYACRARNIYTGEDILRKTEVLVRDSEAPHLLQNLSDYEVSISGSTTLDCQARGVPAPQITWFKNNHKIQQEPGIILGPGNSTLFIERVTEEDEGVYRCRATNQKGAVESAAYLTVQGTSDKSNLELITLTCTCVAATLFWLLLTLFIRKLKRSSSEVKTDYLSIIMDPDEVPLDEQCERLPYDASKWEFARERLKLGKSLGRGAFGKVVQASAFGIKKSPTCRTVAVKMLKEGATASEYKALMTELKILTHIGHHLNVVNLLGACTKQGGPLMVIVEYCKYGNLSNYLKSKRDLFCLNKDAALHMELKKESLEPGLEQGQKPRLDSVSSSSVTSSSFPEDRSVSDVEGDEDYSEISKQPLTMEDLISYSFQVARGMEFLSSRKCIHRDLAARNILLSENNVVKICDFGLARDIYKNPDYVRRGDTRLPLKWMAPESIFDKVYSTKSDVWSYGVLLWEIFSLGGSPYPGVQMDEDFCSRLKEGMRMRTPEYATPEIYQIMLDCWHKDPKERPRFAELVEKLGDLLQANVQQDGKDYIPLNAILTRNSSFTYSTPTFSEDLFKDGFADPHFHSGSSDDVRYVNAFKFMSLERIKTFEELSPNSTSMFEDYQLDTSTLLGSPLLKRFTWTETKPKASMKIDLRIASKSKEAGLSDLPRPSFCFSSCGHIRPVQDDESELGKESCCSPPPDYNSVVLYSSPPA.

Positions Met-1–Gly-22 are cleaved as a signal peptide. The Extracellular portion of the chain corresponds to Tyr-23 to Glu-759. Ig-like C2-type domains lie at Pro-32–Ser-124, Gly-152–His-215, Leu-231–His-328, Phe-334–Pro-429, Gln-430–Lys-550, Pro-557–Val-656, and Pro-662–Thr-748. 2 disulfide bridges follow: Cys-53–Cys-108 and Cys-159–Cys-208. N-linked (GlcNAc...) asparagine glycans are attached at residues Asn-101, Asn-165, Asn-197, and Asn-252. An intrachain disulfide couples Cys-253 to Cys-312. Asn-324, Asn-418, Asn-475, Asn-517, Asn-598, Asn-626, Asn-667, and Asn-714 each carry an N-linked (GlcNAc...) asparagine glycan. 2 disulfide bridges follow: Cys-455–Cys-536 and Cys-578–Cys-637. Cys-683 and Cys-732 are oxidised to a cystine. The helical transmembrane segment at Leu-760 to Ile-781 threads the bilayer. The Cytoplasmic segment spans residues Arg-782–Ala-1333. In terms of domain architecture, Protein kinase spans Leu-828–Leu-1158. Residues Leu-834–Val-842 and Lys-862 each bind ATP. Position 915 is a phosphotyrosine; by autocatalysis (Tyr-915). The tract at residues Glu-947–Asp-983 is disordered. Residues Ser-960 to Ser-970 are compositionally biased toward low complexity. The Proton acceptor role is filled by Asp-1022. A phosphotyrosine; by autocatalysis mark is found at Tyr-1053, Tyr-1169, Tyr-1213, Tyr-1242, Tyr-1322, and Tyr-1328.

The protein belongs to the protein kinase superfamily. Tyr protein kinase family. CSF-1/PDGF receptor subfamily. As to quaternary structure, interacts with VEGFA, VEGFB and PGF. Monomer in the absence of bound VEGFA, VEGFB or PGF. Homodimer in the presence of bound VEGFA, VEGFB and PGF. Can also form a heterodimer with KDR. Interacts (tyrosine phosphorylated) with CBL, CRK, GRB2, NCK1, PIK3R1, PLCG, PSEN1 and PTPN11. Probably interacts with PTPRB. Interacts with RACK1. Identified in a complex with CBL and CD2AP. In terms of processing, N-glycosylated. Post-translationally, ubiquitinated after VEGFA-mediated autophosphorylation, leading to proteolytic degradation. Autophosphorylated on tyrosine residues upon ligand binding. Autophosphorylation occurs in trans, i.e. one subunit of the dimeric receptor phosphorylates tyrosine residues on the other subunit. Phosphorylation at Tyr-1169 is important for interaction with PLCG. Phosphorylation at Tyr-1213 is important for interaction with PIK3R1, PTPN11, GRB2, and PLCG. Phosphorylation at Tyr-1328 is important for endocytosis and for interaction with CBL, NCK1 and CRK. Is probably dephosphorylated by PTPRB.

It is found in the cell membrane. The protein localises to the endosome. It carries out the reaction L-tyrosyl-[protein] + ATP = O-phospho-L-tyrosyl-[protein] + ADP + H(+). With respect to regulation, present in an inactive conformation in the absence of bound ligand. Binding of VEGFA, VEGFB or PGF leads to dimerization and activation by autophosphorylation on tyrosine residues. Its function is as follows. Tyrosine-protein kinase that acts as a cell-surface receptor for VEGFA, VEGFB and PGF, and plays an essential role in the development of embryonic vasculature, the regulation of angiogenesis, cell survival, cell migration, macrophage function, chemotaxis, and cancer cell invasion. Acts as a positive regulator of postnatal retinal hyaloid vessel regression. May play an essential role as a negative regulator of embryonic angiogenesis by inhibiting excessive proliferation of endothelial cells. Can promote endothelial cell proliferation, survival and angiogenesis in adulthood. Its function in promoting cell proliferation seems to be cell-type specific. Promotes PGF-mediated proliferation of endothelial cells, and proliferation of some types of cancer cells, but does not promote proliferation of normal fibroblasts. Has very high affinity for VEGFA and relatively low protein kinase activity; may function as a negative regulator of VEGFA signaling by limiting the amount of free VEGFA and preventing its binding to KDR. Modulates KDR signaling by forming heterodimers with KDR. Ligand binding leads to the activation of several signaling cascades. Activation of PLCG leads to the production of the cellular signaling molecules diacylglycerol and inositol 1,4,5-trisphosphate and the activation of protein kinase C. Mediates phosphorylation of PIK3R1, the regulatory subunit of phosphatidylinositol 3-kinase, leading to the activation of phosphatidylinositol kinase and the downstream signaling pathway. Mediates activation of MAPK1/ERK2, MAPK3/ERK1 and the MAP kinase signaling pathway, as well as of the AKT1 signaling pathway. Phosphorylates SRC, YES1 and PLCG, and may also phosphorylate CBL. Promotes phosphorylation of AKT1 and PTK2/FAK1. This chain is Vascular endothelial growth factor receptor 1 (Flt1), found in Mus musculus (Mouse).